A 253-amino-acid polypeptide reads, in one-letter code: Triosephosphate isomerase (253 aa).

Asparagine 9–lysine 11 is a substrate binding site. Residue histidine 96 is the Electrophile of the active site. Catalysis depends on glutamate 169, which acts as the Proton acceptor. Substrate-binding positions include glycine 175, serine 215, and glycine 236–glycine 237.

The protein belongs to the triosephosphate isomerase family. In terms of assembly, homodimer.

It localises to the cytoplasm. The enzyme catalyses D-glyceraldehyde 3-phosphate = dihydroxyacetone phosphate. Its pathway is carbohydrate biosynthesis; gluconeogenesis. It functions in the pathway carbohydrate degradation; glycolysis; D-glyceraldehyde 3-phosphate from glycerone phosphate: step 1/1. Functionally, involved in the gluconeogenesis. Catalyzes stereospecifically the conversion of dihydroxyacetone phosphate (DHAP) to D-glyceraldehyde-3-phosphate (G3P). This Borreliella burgdorferi (strain ZS7) (Borrelia burgdorferi) protein is Triosephosphate isomerase.